Here is a 236-residue protein sequence, read N- to C-terminus: Kinetochore protein Spc25 (236 aa).

A coiled-coil region spans residues 44–106 (KNIISAKEAI…DMEAQLLRHT (63 aa)). Residues 194–217 (EVAGASPVTPSGSERPKATSKHSN) are disordered.

Belongs to the SPC25 family. As to quaternary structure, component of the Ndc80 complex, which is composed of Ndc80, Nuf2 and Spc25.

The protein localises to the nucleus. The protein resides in the chromosome. It localises to the centromere. It is found in the kinetochore. Acts as a component of the essential kinetochore-associated Ndc80 complex, which is required for chromosome segregation and spindle checkpoint activity during meiosis and mitosis. Required for kinetochore integrity and the organization of stable microtubule binding sites in the outer plate of the kinetochore. Participates in SAC signaling that responds specifically to disruptions in spindle microtubule dynamics. The NDC80 complex synergistically enhances the affinity of the SKA1 complex for microtubules and may allow the NDC80 complex to track depolymerizing microtubules. The chain is Kinetochore protein Spc25 from Drosophila persimilis (Fruit fly).